Reading from the N-terminus, the 432-residue chain is Phosphomethylpyrimidine synthase (432 aa).

Residues asparagine 66, methionine 95, tyrosine 124, histidine 163, 185 to 187 (SRG), 226 to 229 (DGLR), and glutamate 265 contribute to the substrate site. Histidine 269 is a Zn(2+) binding site. Position 292 (tyrosine 292) interacts with substrate. Histidine 333 contributes to the Zn(2+) binding site. [4Fe-4S] cluster is bound by residues cysteine 409, cysteine 412, and cysteine 416.

It belongs to the ThiC family. [4Fe-4S] cluster is required as a cofactor.

The enzyme catalyses 5-amino-1-(5-phospho-beta-D-ribosyl)imidazole + S-adenosyl-L-methionine = 4-amino-2-methyl-5-(phosphooxymethyl)pyrimidine + CO + 5'-deoxyadenosine + formate + L-methionine + 3 H(+). Its pathway is cofactor biosynthesis; thiamine diphosphate biosynthesis. Its function is as follows. Catalyzes the synthesis of the hydroxymethylpyrimidine phosphate (HMP-P) moiety of thiamine from aminoimidazole ribotide (AIR) in a radical S-adenosyl-L-methionine (SAM)-dependent reaction. This chain is Phosphomethylpyrimidine synthase, found in Desulforamulus reducens (strain ATCC BAA-1160 / DSM 100696 / MI-1) (Desulfotomaculum reducens).